We begin with the raw amino-acid sequence, 301 residues long: Tyrosine recombinase XerC (301 aa).

The Core-binding (CB) domain maps to 2-84 (TNTQFYITNF…TLRSFFSYLY (83 aa)). One can recognise a Tyr recombinase domain in the interval 105–291 (ALPKFLTVDD…DLKHLIEVYD (187 aa)). Residues Arg-145, Lys-169, His-243, Arg-246, and His-269 contribute to the active site. Tyr-278 (O-(3'-phospho-DNA)-tyrosine intermediate) is an active-site residue.

This sequence belongs to the 'phage' integrase family. XerC subfamily. Forms a cyclic heterotetrameric complex composed of two molecules of XerC and two molecules of XerD.

It localises to the cytoplasm. Its function is as follows. Site-specific tyrosine recombinase, which acts by catalyzing the cutting and rejoining of the recombining DNA molecules. The XerC-XerD complex is essential to convert dimers of the bacterial chromosome into monomers to permit their segregation at cell division. It also contributes to the segregational stability of plasmids. The chain is Tyrosine recombinase XerC from Thermodesulfovibrio yellowstonii (strain ATCC 51303 / DSM 11347 / YP87).